A 97-amino-acid polypeptide reads, in one-letter code: C-C motif chemokine 8 (97 aa).

An N-terminal signal peptide occupies residues M1–T23. 2 disulfides stabilise this stretch: C32/C57 and C33/C73.

Belongs to the intercrine beta (chemokine CC) family. In terms of assembly, monomer or homodimer; in equilibrium.

It localises to the secreted. In terms of biological role, chemotactic factor that attracts monocytes. This protein can bind heparin. The polypeptide is C-C motif chemokine 8 (Ccl8) (Mus musculus (Mouse)).